A 189-amino-acid chain; its full sequence is Glucose-6-phosphate isomerase (189 aa).

H88, H90, E97, and H136 together coordinate Fe cation.

This sequence belongs to the archaeal-type GPI family. Homodimer. Requires Fe cation as cofactor.

The protein localises to the cytoplasm. The enzyme catalyses alpha-D-glucose 6-phosphate = beta-D-fructose 6-phosphate. The protein operates within carbohydrate degradation; glycolysis; D-glyceraldehyde 3-phosphate and glycerone phosphate from D-glucose: step 2/4. Inhibited by mannose 6-phosphate, fructose 1-phosphate and fructose 1,6-bisphosphate. The sequence is that of Glucose-6-phosphate isomerase (pgiA) from Pyrococcus furiosus (strain ATCC 43587 / DSM 3638 / JCM 8422 / Vc1).